A 211-amino-acid chain; its full sequence is Cytochrome c biogenesis ATP-binding export protein CcmA (211 aa).

The ABC transporter domain occupies 1-211 (MAIHNLACVR…RMAEATSCFG (211 aa)). ATP is bound at residue 33–40 (GSNGAGKT).

Belongs to the ABC transporter superfamily. CcmA exporter (TC 3.A.1.107) family. As to quaternary structure, the complex is composed of two ATP-binding proteins (CcmA) and two transmembrane proteins (CcmB).

The protein localises to the cell inner membrane. It catalyses the reaction heme b(in) + ATP + H2O = heme b(out) + ADP + phosphate + H(+). Functionally, part of the ABC transporter complex CcmAB involved in the biogenesis of c-type cytochromes; once thought to export heme, this seems not to be the case, but its exact role is uncertain. Responsible for energy coupling to the transport system. The protein is Cytochrome c biogenesis ATP-binding export protein CcmA of Sodalis glossinidius (strain morsitans).